Reading from the N-terminus, the 100-residue chain is Co-chaperonin GroES (100 aa).

Belongs to the GroES chaperonin family. Heptamer of 7 subunits arranged in a ring. Interacts with the chaperonin GroEL.

It is found in the cytoplasm. Its function is as follows. Together with the chaperonin GroEL, plays an essential role in assisting protein folding. The GroEL-GroES system forms a nano-cage that allows encapsulation of the non-native substrate proteins and provides a physical environment optimized to promote and accelerate protein folding. GroES binds to the apical surface of the GroEL ring, thereby capping the opening of the GroEL channel. The protein is Co-chaperonin GroES of Mycobacterium marinum (strain ATCC BAA-535 / M).